Here is a 162-residue protein sequence, read N- to C-terminus: UPF0114 protein Sden_0436 (162 aa).

The next 3 membrane-spanning stretches (helical) occupy residues 15 to 35, 53 to 73, and 136 to 156; these read IMAP…IKFF, LVLI…LIMV, and IMWY…MGYL.

It belongs to the UPF0114 family.

It localises to the cell membrane. The chain is UPF0114 protein Sden_0436 from Shewanella denitrificans (strain OS217 / ATCC BAA-1090 / DSM 15013).